We begin with the raw amino-acid sequence, 131 residues long: Acanthoscurrin-2 (131 aa).

Lysine 130 is modified (lysine amide).

In terms of tissue distribution, expressed in hemocytes and secreted into the plasma following bacterial immune challenge.

The protein localises to the secreted. Functionally, antimicrobial protein. Strong activity against the Gram-negative bacterium E.coli SBS363 and yeast C.albicans. No detectable activity against the Gram-positive bacterium M.luteus. The chain is Acanthoscurrin-2 from Acanthoscurria gomesiana (Tarantula spider).